Reading from the N-terminus, the 447-residue chain is Kynureninase (447 aa).

Pyridoxal 5'-phosphate is bound by residues leucine 106, threonine 107, 134–137 (FPSD), aspartate 220, histidine 223, and tyrosine 245. Position 246 is an N6-(pyridoxal phosphate)lysine (lysine 246). 2 residues coordinate pyridoxal 5'-phosphate: tryptophan 275 and asparagine 303.

This sequence belongs to the kynureninase family. In terms of assembly, homodimer. Pyridoxal 5'-phosphate is required as a cofactor.

It localises to the cytoplasm. The catalysed reaction is L-kynurenine + H2O = anthranilate + L-alanine + H(+). It catalyses the reaction 3-hydroxy-L-kynurenine + H2O = 3-hydroxyanthranilate + L-alanine + H(+). The protein operates within amino-acid degradation; L-kynurenine degradation; L-alanine and anthranilate from L-kynurenine: step 1/1. It functions in the pathway cofactor biosynthesis; NAD(+) biosynthesis; quinolinate from L-kynurenine: step 2/3. Catalyzes the cleavage of L-kynurenine (L-Kyn) and L-3-hydroxykynurenine (L-3OHKyn) into anthranilic acid (AA) and 3-hydroxyanthranilic acid (3-OHAA), respectively. This is Kynureninase from Eremothecium gossypii (strain ATCC 10895 / CBS 109.51 / FGSC 9923 / NRRL Y-1056) (Yeast).